The sequence spans 240 residues: Acyl-coenzyme A thioesterase THEM4 (240 aa).

A mitochondrion-targeting transit peptide spans 1-36 (MLRSCAARLRTLGALCLPPVGRRLPGSEPRPELRSF). Phosphoserine is present on residues S37 and S38. Residues K55 and K66 each carry the N6-succinyllysine modification. K74 bears the N6-acetyllysine mark. Residue K98 is modified to N6-succinyllysine. D161 functions as the Proton donor/acceptor in the catalytic mechanism. Residues N183, K185, and 206 to 207 (RK) contribute to the substrate site. K207 is modified (N6-succinyllysine).

It belongs to the THEM4/THEM5 thioesterase family. Homodimer and homotetramer. Interacts with AKT1 in the cytosol. In terms of processing, phosphorylated. Expressed predominantly in skeletal muscle, testis, uterus, brain and kidney. Down-regulated in glioblastoma or glioma compared to non-neoplastic brain due to promoter hypermethylation.

The protein resides in the cell membrane. The protein localises to the cell projection. It localises to the ruffle membrane. Its subcellular location is the cytoplasm. It is found in the mitochondrion. The protein resides in the mitochondrion inner membrane. The protein localises to the mitochondrion intermembrane space. It catalyses the reaction hexadecanoyl-CoA + H2O = hexadecanoate + CoA + H(+). The enzyme catalyses octanoyl-CoA + H2O = octanoate + CoA + H(+). The catalysed reaction is decanoyl-CoA + H2O = decanoate + CoA + H(+). It carries out the reaction dodecanoyl-CoA + H2O = dodecanoate + CoA + H(+). It catalyses the reaction tetradecanoyl-CoA + H2O = tetradecanoate + CoA + H(+). The enzyme catalyses (9Z)-octadecenoyl-CoA + H2O = (9Z)-octadecenoate + CoA + H(+). The catalysed reaction is (5Z,8Z,11Z,14Z)-eicosatetraenoyl-CoA + H2O = (5Z,8Z,11Z,14Z)-eicosatetraenoate + CoA + H(+). Has acyl-CoA thioesterase activity towards medium and long-chain (C14 to C18) fatty acyl-CoA substrates, and probably plays a role in mitochondrial fatty acid metabolism. Plays a role in the apoptotic process, possibly via its regulation of AKT1 activity. According to PubMed:11598301, inhibits AKT1 phosphorylation and activity. According to PubMed:17615157, enhances AKT1 activity by favoring its phosphorylation and translocation to plasma membrane. This Homo sapiens (Human) protein is Acyl-coenzyme A thioesterase THEM4 (THEM4).